The primary structure comprises 1576 residues: ABC transporter ALT5 (1576 aa).

The next 10 helical transmembrane spans lie at 27–47, 72–92, 99–119, 267–287, 289–309, 321–341, 387–407, 417–437, 500–520, and 525–545; these read LKFE…ILAV, ILGF…TQGT, GLFL…VIVC, LPLS…PILP, LVLI…TGFL, GLIG…SLYW, VLAG…AVIV, GFFA…ATVG, ITAM…TLAA, and VATS…APLG. In terms of domain architecture, ABC transmembrane type-1 1 spans 289 to 556; the sequence is LVLIGLSISQ…LFQSVAPLMS (268 aa). The 233-residue stretch at 602-834 folds into the ABC transporter 1 domain; the sequence is FRVVNGSFRW…NGGYLQSLCV (233 aa). Position 636–643 (636–643) interacts with ATP; sequence GPVGSGKS. The next 7 helical transmembrane spans lie at 915-935, 957-977, 981-1001, 1035-1054, 1060-1078, 1142-1162, and 1171-1191; these read VVAL…FAFP, FWVG…FLTM, VTSI…AAIM, LIQF…VLAA, AAMY…KLYL, WLLF…VTLV, and GFAG…ASAM. An ABC transmembrane type-1 2 domain is found at 919-1199; the sequence is VAFLASAICY…AMQSYAKLET (281 aa). One can recognise an ABC transporter 2 domain in the interval 1236-1567; the sequence is IKLDGVSASY…SHSKFRALCE (332 aa). 1278-1285 serves as a coordination point for ATP; it reads GRSGSGKS.

The protein belongs to the ABC transporter superfamily. ABCC family. Conjugate transporter (TC 3.A.1.208) subfamily.

Its subcellular location is the cell membrane. Functionally, ABC transporter that may provide the dual role AAL-toxin export and self-protection by allowing the fungus to evade the harmful effect of its own AAL-toxin production. In Alternaria alternata (Alternaria rot fungus), this protein is ABC transporter ALT5.